The primary structure comprises 577 residues: MNIQALLSEKVSQAMIAAGAPADCEPQVRQSAKVQFGDYQANGMMAVAKKLGMAPRQLAEQVLTHLDLSGIASKVEIAGPGFINIFLDPAFLAEQVQQALASDRLGVSQPARQTIVVDYSAPNVAKEMHVGHLRSTIIGDAAVRTLEFLGHHVIRANHVGDWGTQFGMLIAWLEKQQQENAGEMALADLEGFYRDAKKHYDEDEGFAERARNYVVKLQSGDAYFREMWRKLVDITMTQNQITYDRLNVTLTRDDVMGESLYNPMLPGIVADLKAKGLAVESEGATVVFLDEFKNKEGDPMGVIIQKKDGGYLYTTTDIACAKYRYETLHADRVLYYIDSRQHQHLMQAWTIVRKAGYVPDSVPLEHHMFGMMLGKDGKPFKTRAGGTVKLADLLDEALERARRLVAEKNPDMPADELEKLANAVGIGAVKYADLSKNRTTDYIFDWDNMLAFEGNTAPYMQYAYTRVLSVFRKADIDEQALASAPVIISEDREAQLAARLLQFEETLTVVAREGTPHVMCAYLYDVAGLFSGFYEHCPILSAENDAVRNSRLKLAQLTAKTLKLGLDTLGIETVERM.

Positions Pro-122–His-132 match the 'HIGH' region motif.

The protein belongs to the class-I aminoacyl-tRNA synthetase family. Monomer.

The protein resides in the cytoplasm. It catalyses the reaction tRNA(Arg) + L-arginine + ATP = L-arginyl-tRNA(Arg) + AMP + diphosphate. The chain is Arginine--tRNA ligase from Salmonella arizonae (strain ATCC BAA-731 / CDC346-86 / RSK2980).